Consider the following 87-residue polypeptide: Large ribosomal subunit protein bL27 (87 aa).

Residues 1 to 25 (MAHKKGASSSRNGRDSNAQRLGVKR) form a disordered region. Polar residues predominate over residues 7–19 (ASSSRNGRDSNAQ).

It belongs to the bacterial ribosomal protein bL27 family.

The polypeptide is Large ribosomal subunit protein bL27 (Rhodococcus jostii (strain RHA1)).